Consider the following 234-residue polypeptide: Serum amyloid P-component (234 aa).

A signal peptide spans 1-22 (MDKLLSLLGVSILAGLLLEAFA). The 200-residue stretch at 27–226 (TGKVFVFPRQ…YAVIRPRCVA (200 aa)) folds into the Pentraxin (PTX) domain. A glycan (N-linked (GlcNAc...) asparagine) is linked at asparagine 54. Residues cysteine 58 and cysteine 117 are joined by a disulfide bond. Residues asparagine 81, glutamate 158, glutamine 159, aspartate 160, and glutamine 170 each contribute to the Ca(2+) site.

The protein belongs to the pentraxin family. In terms of assembly, homopentamer. Pentraxin (or pentaxin) have a discoid arrangement of 5 non-covalently bound subunits. The cofactor is Ca(2+).

The protein resides in the secreted. In Mesocricetus auratus (Golden hamster), this protein is Serum amyloid P-component (APCS).